We begin with the raw amino-acid sequence, 331 residues long: N-arachidonyl glycine receptor (331 aa).

The Extracellular portion of the chain corresponds to 1–26; the sequence is MATLSNHNQLDLSNGSHPEEYKIAAL. An N-linked (GlcNAc...) asparagine glycan is attached at asparagine 14. The chain crosses the membrane as a helical span at residues 27–47; it reads VFYSCIFLIGLFVNVTALWVF. Residues 48–56 lie on the Cytoplasmic side of the membrane; the sequence is SCTTKKRTT. A helical membrane pass occupies residues 57–77; it reads VTIYMMNVALLDLVFILSLPF. At 78-95 the chain is on the extracellular side; that stretch reads RMFYYAKGEWPFGEYFCH. Cysteine 94 and cysteine 172 form a disulfide bridge. The chain crosses the membrane as a helical span at residues 96-116; it reads ILGALVVFYPSLALWLLAFIS. Over 117–138 the chain is Cytoplasmic; the sequence is ADRYMAIVQPKYAKELKNTGKA. The helical transmembrane segment at 139–159 threads the bilayer; it reads VLACGGVWVMTLTTTVPLLLL. Residues 160–191 lie on the Extracellular side of the membrane; that stretch reads YEDPDKASSPATCLKISDITHLKAVNVLNFTR. Asparagine 188 carries an N-linked (GlcNAc...) asparagine glycan. A helical membrane pass occupies residues 192–212; it reads LIFFFLIPLFIMIGCYVVIIH. Residues 213 to 236 lie on the Cytoplasmic side of the membrane; it reads SLLRGQTSKLKPKVKEKSIRIIMT. The helical transmembrane segment at 237–257 threads the bilayer; the sequence is LLLQVLVCFVPFHICFAVLML. The Extracellular segment spans residues 258-268; the sequence is QGQENSYSPWG. A helical transmembrane segment spans residues 269–289; the sequence is AFTTFLMNLSTCLDVVLYYIV. The Cytoplasmic segment spans residues 290 to 331; it reads SKQFQARVISVMLYRNYLRSVRRKSVRSGSLRSLSNMNSEML. Serine 322 is subject to Phosphoserine.

It belongs to the G-protein coupled receptor 1 family. Expressed in the eye including cornea, retina, iris and ciliary epithelium (at protein level). Expressed in spleen, liver and lymphocytes with highest expression levels in intestinal intraepithelial lymphocytes.

The protein localises to the cell membrane. It is found in the cytoplasmic vesicle membrane. In terms of biological role, g protein-coupled receptor (GPCR) that plays a role in diverse physiological processes particularly within the immune and nervous systems. Becomes active when triggered by various endogenous ligands including endocannabinoid N-arachidonyl glycine (NAGly), delta-9-tetrahydrocannabinol or resolvin D2/RvD2 derived from the omega-3 fatty acid docosahexaenoic acid (DHA). Upon RvD2 binding, facilitates the resolution of inflammation, aiding in tissue repair and homeostasis. Mechanistically, RvD2 ligation initiates Galphas protein coupling, activation of cAMP-PKA signaling pathway and phosphorylation of STAT3, leading to RvD2-stimulated macrophage phagocytosis. Mediates NAGly-induced process of reorganization of actin filaments and induction of acrosomal exocytosis. Activation by N-arachidonoyl glycine (NAGly) can also induce apoptosis in macrophages. Plays a role in homeostasis of CD8+ subsets of intraepithelial lymphocytes (IELs) (CD8alphaalpha and CD8alphabeta IELs) in small intestine by supporting preferential migration of CD8alphaalpha T-cells to intraepithelial compartment over lamina propria compartment, and by mediating their reconstitution into small intestine after bone marrow transplant. Also participates in hypotensive responses, mediating reduction in intraocular and blood pressure. This chain is N-arachidonyl glycine receptor, found in Mus musculus (Mouse).